A 213-amino-acid chain; its full sequence is Thiopurine S-methyltransferase (213 aa).

The S-adenosyl-L-methionine site is built by tryptophan 10, leucine 45, glutamate 66, and arginine 121.

It belongs to the class I-like SAM-binding methyltransferase superfamily. TPMT family.

Its subcellular location is the cytoplasm. It carries out the reaction S-adenosyl-L-methionine + a thiopurine = S-adenosyl-L-homocysteine + a thiopurine S-methylether.. The protein is Thiopurine S-methyltransferase of Aliivibrio salmonicida (strain LFI1238) (Vibrio salmonicida (strain LFI1238)).